A 3432-amino-acid polypeptide reads, in one-letter code: Genome polyprotein (3432 aa).

The tract at residues 2–15 (TKKPGGPGKNRAIN) is interaction with host EXOC1. The Cytoplasmic segment spans residues 2–109 (TKKPGGPGKN…KKQNKRGGNE (108 aa)). The hydrophobic; homodimerization of capsid protein C stretch occupies residues 37-72 (LLDGRGPVRFVLALITFFKFTALAPTKALLGRWRAV). Positions 106 to 127 (GGNESSIMWLASLAIVIACAGA) are cleaved as a propeptide — ER anchor for the capsid protein C, removed in mature form by serine protease NS3. A helical membrane pass occupies residues 110–130 (SSIMWLASLAIVIACAGAMKL). Over 131-253 (SNFQGKLLMT…ATRYLMKTEN (123 aa)) the chain is Extracellular. N-linked (GlcNAc...) asparagine; by host glycosylation is present at N142. The chain crosses the membrane as a helical span at residues 254 to 274 (WIIRNPGYAFLAAALGWMLGS). The Cytoplasmic segment spans residues 275 to 279 (NSGQR). The helical transmembrane segment at 280–294 (VVFTILLLLVAPAYS) threads the bilayer. The Extracellular segment spans residues 295–746 (FNCLGMGNRD…QVFGGAFRTL (452 aa)). Intrachain disulfides connect C297–C324, C354–C410, C354–C415, C368–C399, C386–C410, and C386–C415. Residues 392–405 (DRGWGNGCGLFGKG) form a fusion peptide region. A glycan (N-linked (GlcNAc...) asparagine; by host) is linked at N448. 2 disulfide bridges follow: C484-C581 and C598-C629. The helical transmembrane segment at 747-767 (FGGMSWITQGLMGALLLWMGV) threads the bilayer. Residues 768–773 (NARDRS) lie on the Cytoplasmic side of the membrane. A helical transmembrane segment spans residues 774 to 794 (IALAFLATGGVLVFLATNVHA). Residues 795 to 1219 (DTGCAIDITR…AFAEANSGGD (425 aa)) lie on the Extracellular side of the membrane. Cystine bridges form between C798–C809, C849–C937, C973–C1017, C1074–C1123, C1085–C1106, and C1107–C1110. N-linked (GlcNAc...) asparagine; by host glycans are attached at residues N924 and N1001. The helical transmembrane segment at 1220 to 1240 (VLHLALIAVFKIQPAFLVMNM) threads the bilayer. The Cytoplasmic portion of the chain corresponds to 1241 to 1250 (LSARWTNQEN). Residues 1251–1271 (MVLVLGAAFFQLASVDLQIGV) form a helical membrane-spanning segment. H1272 is a topological domain (lumenal). The chain crosses the membrane as a helical span at residues 1273 to 1293 (GILNAAAIAWMIVRAITFPTT). Over 1294–1309 (STVAMPVLALLTPGMR) the chain is Cytoplasmic. A helical membrane pass occupies residues 1310–1330 (ALYLDTYRIILLVIGICSLLQ). Residues 1331–1341 (ERRKTMAKKKG) lie on the Lumenal side of the membrane. A helical transmembrane segment spans residues 1342–1362 (AVLLGLALTSTGWFSPTTIAA). The Cytoplasmic portion of the chain corresponds to 1363 to 1374 (GLMVCNPNKKRG). Residues 1375–1395 (WPATEFLSAVGLMFAIVGGLA) traverse the membrane as a helical segment. At 1396 to 1398 (ELD) the chain is on the lumenal side. A helical membrane pass occupies residues 1399–1419 (IESMSIPFMLAGLMAVSYVIS). Over 1420 to 1476 (GKATDMWLDRAADISWEMEAAITGSSRRLDVKLDDDGDFHLIDDPGVPWKVWLLRMS) the chain is Cytoplasmic. Residues 1427 to 1466 (LDRAADISWEMEAAITGSSRRLDVKLDDDGDFHLIDDPGV) are interacts with and activates NS3 protease. Residues 1477–1497 (CIGLAALTPWAIVPAAFGYWL) constitute an intramembrane region (helical). At 1498–2173 (TLKTTKRGGV…RMALEELPDA (676 aa)) the chain is on the cytoplasmic side. In terms of domain architecture, Peptidase S7 spans 1505–1682 (GGVFWDTPSP…DRQEEPVPDA (178 aa)). Catalysis depends on charge relay system; for serine protease NS3 activity residues H1555, D1579, and S1639. One can recognise a Helicase ATP-binding domain in the interval 1685–1841 (PSMLKKRQMT…DSNAPIHDLQ (157 aa)). The tract at residues 1689 to 1692 (KKRQ) is important for RNA-binding. Residue 1698 to 1705 (LHPGSGKT) coordinates ATP. Residues 1789 to 1792 (DEAH) carry the DEAH box motif. Positions 1852 to 2017 (GYEWITEYAG…GLVAQLYGPE (166 aa)) constitute a Helicase C-terminal domain. The residue at position 1893 (K1893) is an N6-acetyllysine; by host. Residues 1950 to 1969 (NPSPITSASAAQRRGRVGRN) are disordered. The regulates the ATPase activity of NS3 helicase stretch occupies residues 2168-2172 (EELPD). A helical membrane pass occupies residues 2174-2194 (LETITLIVAITVMTGGFFLLM). Residues 2195-2199 (MQRKG) lie on the Lumenal side of the membrane. Residues 2200–2220 (IGKMGLGALVLTLATFFLWAA) constitute an intramembrane region (helical). E2221 is a topological domain (lumenal). Residues 2222-2242 (VPGTKIAGTLLVALLLMVVLI) traverse the membrane as a helical segment. Topologically, residues 2243–2257 (PEPEKQRSQTDNQLA) are cytoplasmic. A helical transmembrane segment spans residues 2258–2278 (VFLICVLTVVGVVAANEYGML). Residues 2279–2311 (EKTKADLKSMFGGRTQAPGLTGLPSMALDLRPA) are Lumenal-facing. Residues 2312 to 2332 (TAWALYGGSTVVLTPLLKHLI) constitute an intramembrane region (helical). Topologically, residues 2333-2368 (TSEYVTTSLASISSQAGSLFVLPRGVPFTDLDLTVG) are lumenal. A helical membrane pass occupies residues 2369-2389 (LVFLGCWGQITLTTFLTAMVL). Over 2390–2444 (VTLHYGYMLPGWQAEALRAAQRRTAAGIMKNAVVDGMVATDVPELERTTPLMQKK) the chain is Cytoplasmic. Residues 2445–2465 (VGQVLLIGVSVAAFLVNPNVT) form a helical membrane-spanning segment. The Lumenal segment spans residues 2466–2469 (TVRE). A helical transmembrane segment spans residues 2470–2490 (AGVLVTAATLTLWDNGASAVW). The Cytoplasmic segment spans residues 2491-3432 (NSTTATGLCH…DVLIQEDRVI (942 aa)). The mRNA cap 0-1 NS5-type MT domain occupies 2528-2793 (GRPGGRTLGE…DVNLGSGTRA (266 aa)). Position 2583 (S2583) interacts with S-adenosyl-L-methionine. S2583 carries the phosphoserine modification. The active-site For 2'-O-MTase activity is K2588. Residues G2613, W2614, T2631, K2632, D2658, and V2659 each contribute to the S-adenosyl-L-methionine site. The active-site For 2'-O-MTase activity is the D2673. Residue I2674 coordinates S-adenosyl-L-methionine. Residues K2709 and E2745 each act as for 2'-O-MTase activity in the active site. Y2747 is an S-adenosyl-L-methionine binding site. Residues E2967, H2971, C2976, and C2979 each coordinate Zn(2+). One can recognise a RdRp catalytic domain in the interval 3057-3209 (GKMYADDTAG…KPLDDRFATA (153 aa)). Zn(2+) is bound by residues H3244, C3260, and C3379.

It in the N-terminal section; belongs to the class I-like SAM-binding methyltransferase superfamily. mRNA cap 0-1 NS5-type methyltransferase family. As to quaternary structure, homodimer. Interacts (via N-terminus) with host EXOC1 (via C-terminus); this interaction results in EXOC1 degradation through the proteasome degradation pathway. Forms heterodimers with envelope protein E in the endoplasmic reticulum and Golgi. In terms of assembly, homodimer; in the endoplasmic reticulum and Golgi. Interacts with protein prM. Interacts with non-structural protein 1. Interacts with host HSPA5. As to quaternary structure, homodimer; Homohexamer when secreted. Interacts with envelope protein E. NS1 interacts with NS4B. Interacts with host complement protein CFH; this interaction leads to the degradation of C3. Interacts (via N-terminus) with serine protease NS3. In terms of assembly, forms a heterodimer with serine protease NS3. May form homooligomers. As to quaternary structure, forms a heterodimer with NS2B. Interacts with non-structural protein 2A (via N-terminus). Interacts with NS4B. Interacts with unphosphorylated RNA-directed RNA polymerase NS5; this interaction stimulates RNA-directed RNA polymerase NS5 guanylyltransferase activity. Interacts with host ILF2. Interacts with serine protease NS3. In terms of assembly, homodimer. Interacts with host STAT2; this interaction inhibits the phosphorylation of the latter, and, when all viral proteins are present (polyprotein), targets STAT2 for degradation. Interacts with serine protease NS3. Mn(2+) serves as cofactor. The cofactor is Mg(2+). Specific enzymatic cleavages in vivo yield mature proteins. Cleavages in the lumen of endoplasmic reticulum are performed by host signal peptidase, whereas cleavages in the cytoplasmic side are performed by serine protease NS3. Signal cleavage at the 2K-4B site requires a prior NS3 protease-mediated cleavage at the 4A-2K site. Post-translationally, cleaved in post-Golgi vesicles by a host furin, releasing the mature small envelope protein M, and peptide pr. This cleavage is incomplete as up to 30% of viral particles still carry uncleaved prM. In terms of processing, N-glycosylated. N-glycosylated. The excreted form is glycosylated and this is required for efficient secretion of the protein from infected cells. Post-translationally, acetylated by host KAT5. Acetylation modulates NS3 RNA-binding and unwinding activities and plays an important positive role for viral replication. In terms of processing, phosphorylated on serines residues. This phosphorylation may trigger NS5 nuclear localization.

It is found in the host endoplasmic reticulum membrane. Its subcellular location is the virion. It localises to the host nucleus. The protein localises to the host cytoplasm. The protein resides in the host perinuclear region. It is found in the secreted. Its subcellular location is the virion membrane. It localises to the host cell surface. It catalyses the reaction Selective hydrolysis of -Xaa-Xaa-|-Yaa- bonds in which each of the Xaa can be either Arg or Lys and Yaa can be either Ser or Ala.. The enzyme catalyses a ribonucleoside 5'-triphosphate + H2O = a ribonucleoside 5'-diphosphate + phosphate + H(+). The catalysed reaction is RNA(n) + a ribonucleoside 5'-triphosphate = RNA(n+1) + diphosphate. It carries out the reaction ATP + H2O = ADP + phosphate + H(+). It catalyses the reaction a 5'-end (5'-triphosphoguanosine)-ribonucleoside in mRNA + S-adenosyl-L-methionine = a 5'-end (N(7)-methyl 5'-triphosphoguanosine)-ribonucleoside in mRNA + S-adenosyl-L-homocysteine. The enzyme catalyses a 5'-end (N(7)-methyl 5'-triphosphoguanosine)-ribonucleoside in mRNA + S-adenosyl-L-methionine = a 5'-end (N(7)-methyl 5'-triphosphoguanosine)-(2'-O-methyl-ribonucleoside) in mRNA + S-adenosyl-L-homocysteine + H(+). Plays a role in virus budding by binding to the cell membrane and gathering the viral RNA into a nucleocapsid that forms the core of a mature virus particle. During virus entry, may induce genome penetration into the host cytoplasm after hemifusion induced by the surface proteins. Can migrate to the cell nucleus where it modulates host functions. Overcomes the anti-viral effects of host EXOC1 by sequestering and degrading the latter through the proteasome degradation pathway. In terms of biological role, inhibits RNA silencing by interfering with host Dicer. Functionally, prevents premature fusion activity of envelope proteins in trans-Golgi by binding to envelope protein E at pH6.0. After virion release in extracellular space, gets dissociated from E dimers. Its function is as follows. Acts as a chaperone for envelope protein E during intracellular virion assembly by masking and inactivating envelope protein E fusion peptide. prM is the only viral peptide matured by host furin in the trans-Golgi network probably to avoid catastrophic activation of the viral fusion activity in acidic Golgi compartment prior to virion release. prM-E cleavage is inefficient, and many virions are only partially matured. These uncleaved prM would play a role in immune evasion. May play a role in virus budding. Exerts cytotoxic effects by activating a mitochondrial apoptotic pathway through M ectodomain. May display a viroporin activity. In terms of biological role, binds to host cell surface receptor and mediates fusion between viral and cellular membranes. Efficient virus attachment to cell is, at least in part, mediated by host HSPA5. Envelope protein is synthesized in the endoplasmic reticulum in the form of heterodimer with protein prM. They play a role in virion budding in the ER, and the newly formed immature particle is covered with 60 spikes composed of heterodimer between precursor prM and envelope protein E. The virion is transported to the Golgi apparatus where the low pH causes dissociation of PrM-E heterodimers and formation of E homodimers. prM-E cleavage is inefficient, and many virions are only partially matured. These uncleaved prM would play a role in immune evasion. Functionally, involved in immune evasion, pathogenesis and viral replication. Once cleaved off the polyprotein, is targeted to three destinations: the viral replication cycle, the plasma membrane and the extracellular compartment. Essential for viral replication. Required for formation of the replication complex and recruitment of other non-structural proteins to the ER-derived membrane structures. Excreted as a hexameric lipoparticle that plays a role against host immune response. Antagonizing the complement function. Binds to the host macrophages and dendritic cells. Inhibits signal transduction originating from Toll-like receptor 3 (TLR3). Its function is as follows. Component of the viral RNA replication complex that functions in virion assembly and antagonizes the host alpha/beta interferon antiviral response. Required cofactor for the serine protease function of NS3. May have membrane-destabilizing activity and form viroporins. In terms of biological role, displays three enzymatic activities: serine protease, NTPase and RNA helicase. NS3 serine protease, in association with NS2B, performs its autocleavage and cleaves the polyprotein at dibasic sites in the cytoplasm: C-prM, NS2A-NS2B, NS2B-NS3, NS3-NS4A, NS4A-2K and NS4B-NS5. NS3 RNA helicase binds RNA and unwinds dsRNA in the 3' to 5' direction. Functionally, regulates the ATPase activity of the NS3 helicase activity. NS4A allows NS3 helicase to conserve energy during unwinding. Its function is as follows. Functions as a signal peptide for NS4B and is required for the interferon antagonism activity of the latter. Induces the formation of ER-derived membrane vesicles where the viral replication takes place. Inhibits interferon (IFN)-induced host STAT1 phosphorylation and nuclear translocation, thereby preventing the establishment of cellular antiviral state by blocking the IFN-alpha/beta pathway. Inhibits STAT2 translocation in the nucleus after IFN-alpha treatment. In terms of biological role, replicates the viral (+) and (-) RNA genome. Performs the capping of genomes in the cytoplasm. NS5 methylates viral RNA cap at guanine N-7 and ribose 2'-O positions. Besides its role in RNA genome replication, also prevents the establishment of cellular antiviral state by blocking the interferon-alpha/beta (IFN-alpha/beta) signaling pathway. Inhibits host TYK2 and STAT2 phosphorylation, thereby preventing activation of JAK-STAT signaling pathway. This is Genome polyprotein from Japanese encephalitis virus (strain M28) (JEV).